The chain runs to 217 residues: Phosphoenolpyruvate guanylyltransferase (217 aa).

Phosphoenolpyruvate is bound by residues threonine 150, glycine 165, and serine 168.

This sequence belongs to the CofC family.

It catalyses the reaction phosphoenolpyruvate + GTP + H(+) = enolpyruvoyl-2-diphospho-5'-guanosine + diphosphate. Its pathway is cofactor biosynthesis; coenzyme F420 biosynthesis. Its function is as follows. Guanylyltransferase that catalyzes the activation of phosphoenolpyruvate (PEP) as enolpyruvoyl-2-diphospho-5'-guanosine, via the condensation of PEP with GTP. It is involved in the biosynthesis of coenzyme F420, a hydride carrier cofactor. The polypeptide is Phosphoenolpyruvate guanylyltransferase (Mycobacterium ulcerans (strain Agy99)).